The sequence spans 118 residues: Protein MGF 110-6L (118 aa).

A signal peptide spans 1–18 (MLVIFLGILGLLASQVSS). N96 carries N-linked (GlcNAc...) asparagine; by host glycosylation. The short motif at 115–118 (KDEL) is the Prevents secretion from ER element.

The protein belongs to the asfivirus MGF 110 family. Post-translationally, N-glycosylated.

It is found in the host endoplasmic reticulum lumen. Its function is as follows. Plays a role in virus cell tropism, and may be required for efficient virus replication in macrophages. The polypeptide is Protein MGF 110-6L (African swine fever virus (strain Badajoz 1971 Vero-adapted) (Ba71V)).